The sequence spans 283 residues: Bifunctional protein FolD (283 aa).

NADP(+) contacts are provided by residues 165 to 167 (GRS), serine 190, and valine 231.

The protein belongs to the tetrahydrofolate dehydrogenase/cyclohydrolase family. In terms of assembly, homodimer.

The catalysed reaction is (6R)-5,10-methylene-5,6,7,8-tetrahydrofolate + NADP(+) = (6R)-5,10-methenyltetrahydrofolate + NADPH. It catalyses the reaction (6R)-5,10-methenyltetrahydrofolate + H2O = (6R)-10-formyltetrahydrofolate + H(+). The protein operates within one-carbon metabolism; tetrahydrofolate interconversion. In terms of biological role, catalyzes the oxidation of 5,10-methylenetetrahydrofolate to 5,10-methenyltetrahydrofolate and then the hydrolysis of 5,10-methenyltetrahydrofolate to 10-formyltetrahydrofolate. This chain is Bifunctional protein FolD, found in Bacillus pumilus (strain SAFR-032).